Reading from the N-terminus, the 69-residue chain is Beta-defensin 1 (69 aa).

The N-terminal stretch at 1-21 (MKTHYFLLVMICFLFSQMEPG) is a signal peptide. Residues 22–32 (VGILTSLGRRT) constitute a propeptide that is removed on maturation. 3 disulfide bridges follow: Cys-37-Cys-66, Cys-44-Cys-59, and Cys-49-Cys-67.

This sequence belongs to the beta-defensin family. As to quaternary structure, monomer. Homodimer. Detected in kidney.

It is found in the secreted. It localises to the membrane. Has bactericidal activity. May act as a ligand for C-C chemokine receptor CCR6. Positively regulates the sperm motility and bactericidal activity in a CCR6-dependent manner. Binds to CCR6 and triggers Ca2+ mobilization in the sperm which is important for its motility. The sequence is that of Beta-defensin 1 (Defb1) from Mus musculus (Mouse).